The chain runs to 348 residues: Ion-translocating oxidoreductase complex subunit D (348 aa).

The next 3 membrane-spanning stretches (helical) occupy residues 20-39 (VMRLTLLALVPGIAAQCYLF), 67-87 (YVVSASLKDSSALLTAALIAV), and 124-144 (AMVGYVLLLVSFPAPMTNWMA). FMN phosphoryl threonine is present on threonine 187. Transmembrane regions (helical) follow at residues 221 to 241 (WINLSFLAGGILLFMLRLIPW), 244 to 264 (PVAMLGTLAAASALAHYLAPA), 266 to 286 (FAMPEIELLSGATMLGAFFII), and 300 to 320 (LVFGALVGGLVFIIRHFGGYP).

It belongs to the NqrB/RnfD family. In terms of assembly, the complex is composed of six subunits: RnfA, RnfB, RnfC, RnfD, RnfE and RnfG. FMN is required as a cofactor.

It is found in the cell inner membrane. Part of a membrane-bound complex that couples electron transfer with translocation of ions across the membrane. The sequence is that of Ion-translocating oxidoreductase complex subunit D from Tolumonas auensis (strain DSM 9187 / NBRC 110442 / TA 4).